We begin with the raw amino-acid sequence, 469 residues long: Serine/threonine-protein kinase orb6 (469 aa).

One can recognise a Protein kinase domain in the interval 93–392 (FSTIKVIGKG…AIEIMQHPFF (300 aa)). ATP contacts are provided by residues 99 to 107 (IGKGAFGEV) and Lys-122. Residue Asp-216 is the Proton acceptor of the active site. The region spanning 393–467 (TGIDWDHIRE…KKFNYLTMKG (75 aa)) is the AGC-kinase C-terminal domain.

Belongs to the protein kinase superfamily. Ser/Thr protein kinase family. Interacts with mob2.

The enzyme catalyses L-seryl-[protein] + ATP = O-phospho-L-seryl-[protein] + ADP + H(+). It catalyses the reaction L-threonyl-[protein] + ATP = O-phospho-L-threonyl-[protein] + ADP + H(+). Interacts with pak1/shk1 and coordinates cell morphogenesis with the cell cycle. It is essential for maintenance of cell polarity and is involved in mitotic control. This is Serine/threonine-protein kinase orb6 (orb6) from Schizosaccharomyces pombe (strain 972 / ATCC 24843) (Fission yeast).